The following is a 748-amino-acid chain: Wings apart-like protein homolog 1 (748 aa).

Disordered regions lie at residues 23–199 (TLAQ…VYAT) and 614–644 (EGGC…RLDR). The span at 35–64 (PSVRSSDSPDVPDTPDVPVNQLSSPPLSLP) shows a compositional bias: low complexity. Polar residues-rich tracts occupy residues 68–79 (SEGNAETLQNLS) and 87–96 (LSQSSTSSLN). A compositionally biased stretch (low complexity) spans 172–182 (ISSSSNRYSSR). The region spanning 205-723 (KPLASGYGSR…KRLYDFTKAT (519 aa)) is the WAPL domain. The segment covering 616–633 (GCGDEEEEEEGGDESSDE) has biased composition (acidic residues). The segment covering 634-644 (DGVRKDGRLDR) has biased composition (basic and acidic residues).

Belongs to the WAPL family.

It is found in the nucleus. Its function is as follows. Regulator of meiotic chromosome structure and function, playing a role in sister chromatid cohesion, possibly via antagonizing the coh-3/-4 association with axial elements in nuclei during late prophase, cohesin association with chromatin, DNA double strand break repair and polar body positioning following meiotic divisions during oogenesis. Regulates the morphogenesis and temporal assembly of axial elements to control the organization of meiotic chromosomes in pachytene nuclei and is also involved in meiotic chromosomal remodeling in late pachytene nuclei. Required for the removal of the cohesin component scc-1 from mitotic chromosomes. In Caenorhabditis elegans, this protein is Wings apart-like protein homolog 1.